A 327-amino-acid chain; its full sequence is Phenylalanine--tRNA ligase alpha subunit (327 aa).

Glutamate 252 provides a ligand contact to Mg(2+).

It belongs to the class-II aminoacyl-tRNA synthetase family. Phe-tRNA synthetase alpha subunit type 1 subfamily. Tetramer of two alpha and two beta subunits. Requires Mg(2+) as cofactor.

It is found in the cytoplasm. The catalysed reaction is tRNA(Phe) + L-phenylalanine + ATP = L-phenylalanyl-tRNA(Phe) + AMP + diphosphate + H(+). The polypeptide is Phenylalanine--tRNA ligase alpha subunit (Shigella boydii serotype 18 (strain CDC 3083-94 / BS512)).